The sequence spans 373 residues: Erythronate-4-phosphate dehydrogenase (373 aa).

2 residues coordinate substrate: Ser45 and Thr66. Residues Asp146 and Thr175 each coordinate NAD(+). Residue Arg208 is part of the active site. NAD(+) is bound at residue Asp232. Glu237 is a catalytic residue. The active-site Proton donor is the His254. Gly257 is a binding site for NAD(+). Residue Tyr258 coordinates substrate.

This sequence belongs to the D-isomer specific 2-hydroxyacid dehydrogenase family. PdxB subfamily. In terms of assembly, homodimer.

The protein localises to the cytoplasm. It carries out the reaction 4-phospho-D-erythronate + NAD(+) = (R)-3-hydroxy-2-oxo-4-phosphooxybutanoate + NADH + H(+). It participates in cofactor biosynthesis; pyridoxine 5'-phosphate biosynthesis; pyridoxine 5'-phosphate from D-erythrose 4-phosphate: step 2/5. Functionally, catalyzes the oxidation of erythronate-4-phosphate to 3-hydroxy-2-oxo-4-phosphonooxybutanoate. The sequence is that of Erythronate-4-phosphate dehydrogenase from Serratia proteamaculans (strain 568).